The primary structure comprises 429 residues: MIRRKFSRVFSKRTDMHNIIRLLFRNPFFFLFCLFIPFDNTSLQSIGGIMTASPSALILLPGLFVSILSKGLKVNKNILLCFFGVLLISFLYYFYWVFYFPELDPIFILDRGSRYFLLYVFYFLALYYSLRQNIKDIRAGAALIIIVVIFSVLLNYLDPAIINNKSIIQYNDFISPERLRGFSLEASVFGYQIVCSILLLAVLLNWSTFFLVTVTIVIAILTTSKGAALSFLICICFYFSLKGKLMFRVLLSLCSIVISYIIFKYYFLDALASDIDTYSSVATRGTMFIVGLKIFLFNPLGVGFFGYLPSIYDFTSGVIDFIKSHFPFLNFDEVYTYTIPGEYKTVGTKSLILDLLIIYGVFFLIPFIYFIKKILKEFDAQSERNSYFLLLFIIFSNMFFISHLGSYFTPFCIAFLIILSKNRAENDIN.

11 consecutive transmembrane segments (helical) span residues 27–47 (PFFF…QSIG), 48–68 (GIMT…VSIL), 78–98 (ILLC…YWVF), 106–126 (IFIL…FLAL), 142–162 (ALII…PAII), 198–218 (LLLA…TIVI), 219–239 (AILT…CFYF), 249–269 (VLLS…YFLD), 288–308 (FIVG…FGYL), 351–371 (LILD…IYFI), and 399–419 (FFIS…LIIL).

The protein localises to the cell membrane. In terms of biological role, may function as a transporter. This is an uncharacterized protein from Klebsiella pneumoniae.